The following is a 480-amino-acid chain: UDP-glucose 6-dehydrogenase 4 (480 aa).

NAD(+)-binding positions include 3-20 (KICCIGAGYVGGPTMAVI), D33, R38, T90, T128, and E161. Residues 157–161 (EFLAE), K216, 216–223 (KLAANAFL), 256–269 (RIGSKFLNASVGFG), and G269 each bind substrate. C272 serves as the catalytic Nucleophile. Residue K275 coordinates NAD(+). Positions 334 and 335 each coordinate substrate. Position 342 (R342) interacts with NAD(+). Residue R447 coordinates substrate.

The protein belongs to the UDP-glucose/GDP-mannose dehydrogenase family.

The catalysed reaction is UDP-alpha-D-glucose + 2 NAD(+) + H2O = UDP-alpha-D-glucuronate + 2 NADH + 3 H(+). It functions in the pathway nucleotide-sugar biosynthesis; UDP-alpha-D-glucuronate biosynthesis; UDP-alpha-D-glucuronate from UDP-alpha-D-glucose: step 1/1. Inhibited by UDP-xylose. Involved in the biosynthesis of UDP-glucuronic acid (UDP-GlcA), providing nucleotide sugars for cell-wall polymers. This chain is UDP-glucose 6-dehydrogenase 4, found in Arabidopsis thaliana (Mouse-ear cress).